A 272-amino-acid chain; its full sequence is ATP synthase subunit a (272 aa).

The next 7 membrane-spanning stretches (helical) occupy residues 39-59 (GFWA…LIFI), 103-123 (VAPL…LKWI), 124-144 (PVDY…KIVP), 152-172 (FGIS…VKGV), 181-201 (FTPF…IIGL), 221-241 (VVFI…NVPW), and 242-262 (AIFH…LTVV).

The protein belongs to the ATPase A chain family. F-type ATPases have 2 components, CF(1) - the catalytic core - and CF(0) - the membrane proton channel. CF(1) has five subunits: alpha(3), beta(3), gamma(1), delta(1), epsilon(1). CF(0) has three main subunits: a(1), b(2) and c(9-12). The alpha and beta chains form an alternating ring which encloses part of the gamma chain. CF(1) is attached to CF(0) by a central stalk formed by the gamma and epsilon chains, while a peripheral stalk is formed by the delta and b chains.

The protein localises to the cell inner membrane. Functionally, key component of the proton channel; it plays a direct role in the translocation of protons across the membrane. This is ATP synthase subunit a from Ectopseudomonas mendocina (strain ymp) (Pseudomonas mendocina).